The chain runs to 215 residues: High frequency lysogenization protein HflD homolog (215 aa).

It belongs to the HflD family.

It is found in the cytoplasm. Its subcellular location is the cell inner membrane. This chain is High frequency lysogenization protein HflD homolog, found in Haemophilus ducreyi (strain 35000HP / ATCC 700724).